Here is a 432-residue protein sequence, read N- to C-terminus: GTPase HflX (432 aa).

Positions 202-367 (FTVALVGYTN…ELRRAVGRAM (166 aa)) constitute a Hflx-type G domain. GTP contacts are provided by residues 208-215 (GYTNAGKS), 233-237 (FATLD), 255-258 (DTVG), 321-324 (NKID), and 345-347 (SAQ). 2 residues coordinate Mg(2+): Ser215 and Thr235.

Belongs to the TRAFAC class OBG-HflX-like GTPase superfamily. HflX GTPase family. In terms of assembly, monomer. Associates with the 50S ribosomal subunit. Mg(2+) is required as a cofactor.

The protein localises to the cytoplasm. Its function is as follows. GTPase that associates with the 50S ribosomal subunit and may have a role during protein synthesis or ribosome biogenesis. In Magnetococcus marinus (strain ATCC BAA-1437 / JCM 17883 / MC-1), this protein is GTPase HflX.